We begin with the raw amino-acid sequence, 595 residues long: Aspartate--tRNA(Asp/Asn) ligase (595 aa).

Glu-175 is a binding site for L-aspartate. Residues 199–202 form an aspartate region; the sequence is QQYK. 2 residues coordinate L-aspartate: Arg-221 and His-454. 221–223 lines the ATP pocket; sequence RDE. Residue Glu-488 participates in ATP binding. Arg-495 contacts L-aspartate. Residue 540–543 coordinates ATP; it reads GIDR.

It belongs to the class-II aminoacyl-tRNA synthetase family. Type 1 subfamily. Homodimer.

Its subcellular location is the cytoplasm. The catalysed reaction is tRNA(Asx) + L-aspartate + ATP = L-aspartyl-tRNA(Asx) + AMP + diphosphate. Aspartyl-tRNA synthetase with relaxed tRNA specificity since it is able to aspartylate not only its cognate tRNA(Asp) but also tRNA(Asn). Reaction proceeds in two steps: L-aspartate is first activated by ATP to form Asp-AMP and then transferred to the acceptor end of tRNA(Asp/Asn). This chain is Aspartate--tRNA(Asp/Asn) ligase, found in Brucella abortus (strain S19).